The chain runs to 966 residues: Isoleucine--tRNA ligase (966 aa).

Positions 1-16 (MSDDKRAKSDKNEKNK) are enriched in basic and acidic residues. A disordered region spans residues 1–24 (MSDDKRAKSDKNEKNKYPVNLLDT). The 'HIGH' region motif lies at 69–79 (PYANGDIHIGH). Position 599 (E599) interacts with L-isoleucyl-5'-AMP. A 'KMSKS' region motif is present at residues 640-644 (KMSKS). An ATP-binding site is contributed by K643. Zn(2+) contacts are provided by C929, C932, C949, and C952.

It belongs to the class-I aminoacyl-tRNA synthetase family. IleS type 1 subfamily. In terms of assembly, monomer. Requires Zn(2+) as cofactor.

It localises to the cytoplasm. It carries out the reaction tRNA(Ile) + L-isoleucine + ATP = L-isoleucyl-tRNA(Ile) + AMP + diphosphate. Functionally, catalyzes the attachment of isoleucine to tRNA(Ile). As IleRS can inadvertently accommodate and process structurally similar amino acids such as valine, to avoid such errors it has two additional distinct tRNA(Ile)-dependent editing activities. One activity is designated as 'pretransfer' editing and involves the hydrolysis of activated Val-AMP. The other activity is designated 'posttransfer' editing and involves deacylation of mischarged Val-tRNA(Ile). The sequence is that of Isoleucine--tRNA ligase from Cupriavidus taiwanensis (strain DSM 17343 / BCRC 17206 / CCUG 44338 / CIP 107171 / LMG 19424 / R1) (Ralstonia taiwanensis (strain LMG 19424)).